A 680-amino-acid polypeptide reads, in one-letter code: ABC transporter B family member 24, mitochondrial (680 aa).

A mitochondrion-targeting transit peptide spans 1-75 (MMRVSQLQLC…MFFSTSTSAP (75 aa)). Residues 108–402 (VISAFACLVG…LGVVYSDTVQ (295 aa)) enclose the ABC transmembrane type-1 domain. 6 helical membrane-spanning segments follow: residues 109-129 (ISAFACLVGAKFLNVQVPFLF), 145-165 (NPYLVAAFATPSSVLIGYGIA), 232-252 (AMVFNIMPTILEISMVSCILA), 255-275 (FGAVYALITCLSVGSYIAFTL), 340-360 (FALLNFGQSFIFSTALSTAMV), and 376-396 (LVMVNGLLFQLSLPLYFLGVV). Positions 439 to 673 (ISFENVHFSY…SGRYAKLWTQ (235 aa)) constitute an ABC transporter domain. ATP is bound by residues tyrosine 448 and 472–483 (GSSGSGKSTILR).

It belongs to the ABC transporter superfamily. ABCB family. Heavy Metal importer (TC 3.A.1.210) subfamily. As to quaternary structure, homodimer. In terms of tissue distribution, mostly expressed at low levels in roots and flowers.

It localises to the mitochondrion inner membrane. In terms of biological role, performs an essential function in the generation of cytoplasmic iron-sulfur proteins by mediating export of Fe/S cluster precursors synthesized by NFS1 and other mitochondrial proteins. Not involved in the export of cyclic pyranopterin monophosphate (cPMP) from mitochondria to the cytosol. The sequence is that of ABC transporter B family member 24, mitochondrial (ABCB24) from Arabidopsis thaliana (Mouse-ear cress).